Consider the following 262-residue polypeptide: Thiazole synthase (262 aa).

K104 acts as the Schiff-base intermediate with DXP in catalysis. Residues G165, 191-192 (AG), and 213-214 (NT) contribute to the 1-deoxy-D-xylulose 5-phosphate site.

This sequence belongs to the ThiG family. Homotetramer. Forms heterodimers with either ThiH or ThiS.

It is found in the cytoplasm. It carries out the reaction [ThiS sulfur-carrier protein]-C-terminal-Gly-aminoethanethioate + 2-iminoacetate + 1-deoxy-D-xylulose 5-phosphate = [ThiS sulfur-carrier protein]-C-terminal Gly-Gly + 2-[(2R,5Z)-2-carboxy-4-methylthiazol-5(2H)-ylidene]ethyl phosphate + 2 H2O + H(+). It functions in the pathway cofactor biosynthesis; thiamine diphosphate biosynthesis. In terms of biological role, catalyzes the rearrangement of 1-deoxy-D-xylulose 5-phosphate (DXP) to produce the thiazole phosphate moiety of thiamine. Sulfur is provided by the thiocarboxylate moiety of the carrier protein ThiS. In vitro, sulfur can be provided by H(2)S. The polypeptide is Thiazole synthase (Nitrosococcus oceani (strain ATCC 19707 / BCRC 17464 / JCM 30415 / NCIMB 11848 / C-107)).